The following is a 116-amino-acid chain: Prefoldin subunit beta (116 aa).

It belongs to the prefoldin subunit beta family. As to quaternary structure, heterohexamer of two alpha and four beta subunits.

The protein resides in the cytoplasm. In terms of biological role, molecular chaperone capable of stabilizing a range of proteins. Seems to fulfill an ATP-independent, HSP70-like function in archaeal de novo protein folding. The polypeptide is Prefoldin subunit beta (Methanobrevibacter smithii (strain ATCC 35061 / DSM 861 / OCM 144 / PS)).